A 374-amino-acid chain; its full sequence is uncharacterized protein (374 aa).

Residues 1–13 (METKYHEYDDVQT) show a composition bias toward basic and acidic residues. Disordered stretches follow at residues 1 to 20 (METK…PSNK), 91 to 193 (SPMT…PLNQ), and 236 to 374 (KINN…SDFE). A compositionally biased stretch (low complexity) spans 95–155 (NNNNNNNNNN…NNSSNNNNNN (61 aa)). The segment covering 166–193 (ISSNQSSPLSIYSTPPNPSSYVSSPLNQ) has biased composition (polar residues). Residues 242-262 (APPPPPKACAPPPPPPPPPPI) are compositionally biased toward pro residues. Over residues 277–300 (NNNNNNNNNNNSSNTNDSNNTNNT) the composition is skewed to low complexity.

This is an uncharacterized protein from Dictyostelium discoideum (Social amoeba).